Consider the following 444-residue polypeptide: 4-O-dimethylallyl-L-tyrosine synthase (444 aa).

The protein belongs to the tryptophan dimethylallyltransferase family. In terms of assembly, homodimer.

It catalyses the reaction L-tyrosine + dimethylallyl diphosphate = 4-O-dimethylallyl-L-tyrosine + diphosphate. Functionally, 4-O-dimethylallyl-L-tyrosine synthase; part of the gene cluster that mediates the biosynthesis of an unusual class of epipolythiodioxopiperazines (ETPs) lacking the reactive thiol group important for toxicity. Firstly, L-tyrosine is prenylated by tcpD, before undergoing condensation with L-glycine in a reaction catalyzed by the NRPS tcpP leading to the diketopiperazine (DKP) backbone. Afterwards the alpha-carbon of tyrosine is oxidized by the cytochrome P450 tcpC to form a hydroxyl group. However, in contrast other ETP biosynthesis pathways studied so far, tcpC is not able to bishydroxylate the DKP at both alpha-carbon positions, but hydroxylates the alpha-carbon of the tyrosine part and the nitrogen of the glycine part. The next steps involve an alpha,beta-elimination reaction catalyzed by tcpI, a methylation by the methyltransferase tcpN the action of the four enzyme cascade tcpG/K/J/I. Due to a dysfunctional cytochrome P450 monooxygenase tcpC, the pathway leads to the biosynthesis of probable non-toxic metabolites lacking the reactive thiol group. This chain is 4-O-dimethylallyl-L-tyrosine synthase, found in Claviceps purpurea (strain 20.1) (Ergot fungus).